The chain runs to 411 residues: ATP-dependent RNA helicase eIF4A (411 aa).

Positions 1–23 (MSKPEDTSAAAAAPAGEAGNNLN) are disordered. Low complexity predominate over residues 9 to 19 (AAAAAPAGEAG). The Q motif signature appears at 38–66 (DNFDNMELKEELLRGVYAYGFERPSAIQA). In terms of domain architecture, Helicase ATP-binding spans 69–239 (IVPVIKGHDV…KKFMRDPIRI (171 aa)). 82 to 89 (AQSGTGKT) contributes to the ATP binding site. Positions 187–190 (DEAD) match the DEAD box motif. In terms of domain architecture, Helicase C-terminal spans 250–411 (GIKQFYVAVE…EMPLNVADLI (162 aa)).

The protein belongs to the DEAD box helicase family. eIF4A subfamily. As to quaternary structure, component of the eIF4F complex, which composition varies with external and internal environmental conditions. It is composed of at least eIF4A, eIF4E and eIF4G.

The protein resides in the cytoplasm. The catalysed reaction is ATP + H2O = ADP + phosphate + H(+). Functionally, ATP-dependent RNA helicase which is a subunit of the eIF4F complex involved in cap recognition and is required for mRNA binding to ribosome. In the current model of translation initiation, eIF4A unwinds RNA secondary structures in the 5'-UTR of mRNAs which is necessary to allow efficient binding of the small ribosomal subunit, and subsequent scanning for the initiator codon. The chain is ATP-dependent RNA helicase eIF4A (TIF1) from Mycosarcoma maydis (Corn smut fungus).